The primary structure comprises 455 residues: MDMSFPKGFLWGAATASYQIEGAWNEDGKGESIWDRFTHQKRNILYGHNGDVACDHYHRFEEDVSLMKELGLKAYRFSIAWTRIFPDGFGTVNQKGLEFYDRLINKLVENGIEPVVTLYHWDLPQKLQDIGGWANPEIVNYYFDYAMLVINRYKDKVKKWITFNEPYCIAFLGYFHGIHAPGIKDFKVAMDVVHSLMLSHFKVVKAVKENNIDVEVGITLNLTPVYLQTERLGYKVSEIEREMVSLSSQLDNQLFLDPVLKGSYPQKLLDYLVQKDLLDSQKALSMQQEVKENFIFPDFLGINYYTRAVRLYDENSSWIFPIRWEHPAGEYTEMGWEVFPQGLFDLLIWIKESYPQIPIYITENGAAYNDIVTEDGKVHDSKRIEYLKQHFEAARKAIENGVDLRGYFVWSLMDNFEWAMGYTKRFGIIYVDYETQKRIKKDSFYFYQQYIKENS.

The Proton donor role is filled by Glu165. Glu363 serves as the catalytic Nucleophile.

It belongs to the glycosyl hydrolase 1 family.

It catalyses the reaction Hydrolysis of terminal, non-reducing beta-D-glucosyl residues with release of beta-D-glucose.. This is Beta-glucosidase A (bglA) from Caldicellulosiruptor saccharolyticus (Caldocellum saccharolyticum).